We begin with the raw amino-acid sequence, 453 residues long: Homogentisate 1,2-dioxygenase (453 aa).

Residue histidine 304 is the Proton acceptor of the active site. Fe cation contacts are provided by histidine 347 and glutamate 353. Tyrosine 362 and histidine 383 together coordinate homogentisate. Histidine 383 contributes to the Fe cation binding site.

It belongs to the homogentisate dioxygenase family. Hexamer; dimer of trimers. It depends on Fe cation as a cofactor.

It carries out the reaction homogentisate + O2 = 4-maleylacetoacetate + H(+). It functions in the pathway amino-acid degradation; L-phenylalanine degradation; acetoacetate and fumarate from L-phenylalanine: step 4/6. In terms of biological role, involved in the catabolism of homogentisate (2,5-dihydroxyphenylacetate or 2,5-OH-PhAc), a central intermediate in the degradation of phenylalanine and tyrosine. Catalyzes the oxidative ring cleavage of the aromatic ring of homogentisate to yield maleylacetoacetate. The sequence is that of Homogentisate 1,2-dioxygenase from Sinorhizobium fredii (strain NBRC 101917 / NGR234).